Consider the following 404-residue polypeptide: Cysteine desulfurase IscS (404 aa).

Residues 75–76, Asn155, Gln183, and 203–205 contribute to the pyridoxal 5'-phosphate site; these read AT and TSH. Lys206 bears the N6-(pyridoxal phosphate)lysine mark. Position 243 (Thr243) interacts with pyridoxal 5'-phosphate. Cys328 functions as the Cysteine persulfide intermediate in the catalytic mechanism. Cys328 contacts [2Fe-2S] cluster.

This sequence belongs to the class-V pyridoxal-phosphate-dependent aminotransferase family. NifS/IscS subfamily. In terms of assembly, homodimer. Forms a heterotetramer with IscU, interacts with other sulfur acceptors. The cofactor is pyridoxal 5'-phosphate.

It is found in the cytoplasm. It catalyses the reaction (sulfur carrier)-H + L-cysteine = (sulfur carrier)-SH + L-alanine. It participates in cofactor biosynthesis; iron-sulfur cluster biosynthesis. Functionally, master enzyme that delivers sulfur to a number of partners involved in Fe-S cluster assembly, tRNA modification or cofactor biosynthesis. Catalyzes the removal of elemental sulfur atoms from cysteine to produce alanine. Functions as a sulfur delivery protein for Fe-S cluster synthesis onto IscU, an Fe-S scaffold assembly protein, as well as other S acceptor proteins. In Photobacterium profundum (strain SS9), this protein is Cysteine desulfurase IscS.